The following is a 72-amino-acid chain: Translation initiation factor IF-1 (72 aa).

Residues 1–72 (MAKDNVIEIE…SKGRITYRFK (72 aa)) enclose the S1-like domain.

Belongs to the IF-1 family. Component of the 30S ribosomal translation pre-initiation complex which assembles on the 30S ribosome in the order IF-2 and IF-3, IF-1 and N-formylmethionyl-tRNA(fMet); mRNA recruitment can occur at any time during PIC assembly.

The protein resides in the cytoplasm. Functionally, one of the essential components for the initiation of protein synthesis. Stabilizes the binding of IF-2 and IF-3 on the 30S subunit to which N-formylmethionyl-tRNA(fMet) subsequently binds. Helps modulate mRNA selection, yielding the 30S pre-initiation complex (PIC). Upon addition of the 50S ribosomal subunit IF-1, IF-2 and IF-3 are released leaving the mature 70S translation initiation complex. This chain is Translation initiation factor IF-1, found in Pediococcus pentosaceus (strain ATCC 25745 / CCUG 21536 / LMG 10740 / 183-1w).